A 958-amino-acid polypeptide reads, in one-letter code: Structure-specific endonuclease subunit SLX4 (958 aa).

6 disordered regions span residues 89–123 (AESP…KGKT), 183–209 (QKKA…GPID), 326–400 (LATA…LSPT), 531–589 (DLTI…EQHQ), 594–613 (QSNT…SFEL), and 655–849 (STAA…SPPA). Basic residues predominate over residues 109-121 (KKPRTAGARKKKG). The span at 332–341 (RRPEEAERST) shows a compositional bias: basic and acidic residues. Polar residues predominate over residues 342-351 (LSRQQDTHIP). A compositionally biased stretch (low complexity) spans 364–373 (AASKSASAKP). A compositionally biased stretch (basic residues) spans 374–389 (KAAKKAPKPRATKKKQ). Residues 600 to 610 (QPQPAPPPPPS) show a composition bias toward pro residues. Low complexity-rich tracts occupy residues 655-666 (STAAQAAMSTSA), 775-787 (TTSP…RAKA), and 821-838 (PDSG…SSPD).

The protein belongs to the SLX4 family. Forms a heterodimer with SLX1. Post-translationally, phosphorylated in response to DNA damage.

It is found in the nucleus. Regulatory subunit of the SLX1-SLX4 structure-specific endonuclease that resolves DNA secondary structures generated during DNA repair and recombination. Has endonuclease activity towards branched DNA substrates, introducing single-strand cuts in duplex DNA close to junctions with ss-DNA. In Chaetomium globosum (strain ATCC 6205 / CBS 148.51 / DSM 1962 / NBRC 6347 / NRRL 1970) (Soil fungus), this protein is Structure-specific endonuclease subunit SLX4.